The sequence spans 415 residues: Amylovoran biosynthesis protein AmsJ (415 aa).

Belongs to the polysaccharide pyruvyl transferase family.

It participates in glycan metabolism; exopolysaccharide biosynthesis. Functionally, involved in the biosynthesis of amylovoran which functions as a virulence factor. The polypeptide is Amylovoran biosynthesis protein AmsJ (amsJ) (Erwinia amylovora (Fire blight bacteria)).